A 752-amino-acid polypeptide reads, in one-letter code: Myotubularin-related protein 10 (752 aa).

A Myotubularin phosphatase domain is found at 206–636 (FDCSSDWDRE…SHLSVWKLYF (431 aa)). Residues 652-683 (TAFHKLSVLTDEIEMLQNQLRQYKGAAGTANT) adopt a coiled-coil conformation.

Belongs to the protein-tyrosine phosphatase family. Non-receptor class myotubularin subfamily.

This is Myotubularin-related protein 10 (mtmr10) from Danio rerio (Zebrafish).